Consider the following 550-residue polypeptide: Dihydroxy-acid dehydratase (550 aa).

Asp-78 lines the Mg(2+) pocket. Cys-119 contacts [2Fe-2S] cluster. Residues Asp-120 and Lys-121 each coordinate Mg(2+). N6-carboxylysine is present on Lys-121. Cys-192 is a binding site for [2Fe-2S] cluster. A Mg(2+)-binding site is contributed by Glu-440. Ser-466 functions as the Proton acceptor in the catalytic mechanism.

This sequence belongs to the IlvD/Edd family. In terms of assembly, homodimer. [2Fe-2S] cluster is required as a cofactor. Requires Mg(2+) as cofactor.

The catalysed reaction is (2R)-2,3-dihydroxy-3-methylbutanoate = 3-methyl-2-oxobutanoate + H2O. The enzyme catalyses (2R,3R)-2,3-dihydroxy-3-methylpentanoate = (S)-3-methyl-2-oxopentanoate + H2O. The protein operates within amino-acid biosynthesis; L-isoleucine biosynthesis; L-isoleucine from 2-oxobutanoate: step 3/4. It functions in the pathway amino-acid biosynthesis; L-valine biosynthesis; L-valine from pyruvate: step 3/4. In terms of biological role, functions in the biosynthesis of branched-chain amino acids. Catalyzes the dehydration of (2R,3R)-2,3-dihydroxy-3-methylpentanoate (2,3-dihydroxy-3-methylvalerate) into 2-oxo-3-methylpentanoate (2-oxo-3-methylvalerate) and of (2R)-2,3-dihydroxy-3-methylbutanoate (2,3-dihydroxyisovalerate) into 2-oxo-3-methylbutanoate (2-oxoisovalerate), the penultimate precursor to L-isoleucine and L-valine, respectively. The chain is Dihydroxy-acid dehydratase from Thermodesulfovibrio yellowstonii (strain ATCC 51303 / DSM 11347 / YP87).